A 136-amino-acid chain; its full sequence is NHL-repeat-containing protein 4 (136 aa).

2 NHL repeats span residues 48-91 (QPLG…FPRV) and 93-132 (PPIC…YQYL).

The chain is NHL-repeat-containing protein 4 (Nhlrc4) from Mus musculus (Mouse).